The primary structure comprises 108 residues: uncharacterized protein (108 aa).

Low complexity predominate over residues 48-73; that stretch reads NSNIPSSSSSSPSFASFFSSTSTSAT. The segment at 48–81 is disordered; the sequence is NSNIPSSSSSSPSFASFFSSTSTSATLNGSSNNK.

This is an uncharacterized protein from Dictyostelium discoideum (Social amoeba).